The following is a 157-amino-acid chain: Probable succinate transporter subunit YjjB (157 aa).

The next 4 membrane-spanning stretches (helical) occupy residues 8–28 (LALM…AMVF), 55–75 (AGFN…SIGI), 87–107 (VFTV…TAMI), and 129–149 (FLKA…PGLW).

This sequence belongs to the ThrE exporter (TC 2.A.79) family. In terms of assembly, the transporter is composed of YjjB and YjjP.

The protein resides in the cell inner membrane. Functionally, involved in succinate export with YjjP. Both proteins are required for export. The polypeptide is Probable succinate transporter subunit YjjB (Salmonella agona (strain SL483)).